The sequence spans 277 residues: Probable endonuclease 4 (277 aa).

The Zn(2+) site is built by H67, H107, E142, D176, H179, H211, D224, H226, and E256.

Belongs to the AP endonuclease 2 family. Requires Zn(2+) as cofactor.

The catalysed reaction is Endonucleolytic cleavage to 5'-phosphooligonucleotide end-products.. Functionally, endonuclease IV plays a role in DNA repair. It cleaves phosphodiester bonds at apurinic or apyrimidinic (AP) sites, generating a 3'-hydroxyl group and a 5'-terminal sugar phosphate. In Akkermansia muciniphila (strain ATCC BAA-835 / DSM 22959 / JCM 33894 / BCRC 81048 / CCUG 64013 / CIP 107961 / Muc), this protein is Probable endonuclease 4.